The following is a 79-amino-acid chain: Cytochrome b (79 aa).

Helical transmembrane passes span 1–7 (SALFLAM), 31–52 (WLIR…YLHI), and 67–79 (WNIG…LTMA). Residues His37 and His51 each coordinate heme b.

This sequence belongs to the cytochrome b family. As to quaternary structure, the cytochrome bc1 complex contains 11 subunits: 3 respiratory subunits (MT-CYB, CYC1 and UQCRFS1), 2 core proteins (UQCRC1 and UQCRC2) and 6 low-molecular weight proteins (UQCRH/QCR6, UQCRB/QCR7, UQCRQ/QCR8, UQCR10/QCR9, UQCR11/QCR10 and a cleavage product of UQCRFS1). This cytochrome bc1 complex then forms a dimer. Heme b serves as cofactor.

The protein resides in the mitochondrion inner membrane. Its function is as follows. Component of the ubiquinol-cytochrome c reductase complex (complex III or cytochrome b-c1 complex) that is part of the mitochondrial respiratory chain. The b-c1 complex mediates electron transfer from ubiquinol to cytochrome c. Contributes to the generation of a proton gradient across the mitochondrial membrane that is then used for ATP synthesis. In Dipodomys californicus (California kangaroo rat), this protein is Cytochrome b (MT-CYB).